The sequence spans 428 residues: 3-phosphoshikimate 1-carboxyvinyltransferase (428 aa).

3-phosphoshikimate-binding residues include K21, S22, and R26. Residue K21 participates in phosphoenolpyruvate binding. Phosphoenolpyruvate contacts are provided by G91 and R119. 3-phosphoshikimate contacts are provided by S164, Q166, D313, and K340. Phosphoenolpyruvate is bound at residue Q166. The active-site Proton acceptor is the D313. 2 residues coordinate phosphoenolpyruvate: R344 and R386.

This sequence belongs to the EPSP synthase family. Monomer.

The protein localises to the cytoplasm. The enzyme catalyses 3-phosphoshikimate + phosphoenolpyruvate = 5-O-(1-carboxyvinyl)-3-phosphoshikimate + phosphate. The protein operates within metabolic intermediate biosynthesis; chorismate biosynthesis; chorismate from D-erythrose 4-phosphate and phosphoenolpyruvate: step 6/7. Catalyzes the transfer of the enolpyruvyl moiety of phosphoenolpyruvate (PEP) to the 5-hydroxyl of shikimate-3-phosphate (S3P) to produce enolpyruvyl shikimate-3-phosphate and inorganic phosphate. In Campylobacter jejuni subsp. jejuni serotype O:6 (strain 81116 / NCTC 11828), this protein is 3-phosphoshikimate 1-carboxyvinyltransferase.